We begin with the raw amino-acid sequence, 391 residues long: Zinc finger protein ubi-d4 (391 aa).

A2 carries the N-acetylalanine modification. Glycyl lysine isopeptide (Lys-Gly) (interchain with G-Cter in SUMO2) cross-links involve residues K10, K99, K107, and K108. Disordered stretches follow at residues 79–146 and 165–196; these read WRKK…LGEF and DDLDDEDYEEDTPKRRGKGKSKGKGVGSARKK. Basic and acidic residues-rich tracts occupy residues 100–110 and 126–140; these read PDTDQTLKKEG and DPLEKRGAPDPRVDD. At S142 the chain carries Phosphoserine. Acidic residues predominate over residues 165–174; that stretch reads DDLDDEDYEE. Y172 is modified (phosphotyrosine). A Phosphothreonine modification is found at T176. Residues K178 and K196 each participate in a glycyl lysine isopeptide (Lys-Gly) (interchain with G-Cter in SUMO2) cross-link. Residue S200 is modified to Phosphoserine. The segment at 209 to 232 adopts a C2H2-type zinc-finger fold; it reads YACDICGKRYKNRPGLSYHYAHSH. The interval 233 to 266 is disordered; the sequence is LAEEEGEDKEDSQPPTPVSQRSEEQKSKKGPDGL. S244 is subject to Phosphoserine. Basic and acidic residues predominate over residues 253–263; the sequence is RSEEQKSKKGP. 2 PHD-type zinc fingers span residues 270 to 330 and 327 to 377; these read NNYC…CKCC and CKCC…CLDL. A Phosphoserine modification is found at S280. A Glycyl lysine isopeptide (Lys-Gly) (interchain with G-Cter in SUMO2) cross-link involves residue K281.

It belongs to the requiem/DPF family. Interacts with the nucleosomes, in particular nucleosomes bearing histone H3 crotonylated at 'Lys-14' (H3K14cr) for which DPF2 has high affinity. Also interacts (via PHD-type zinc finger domains) with histone H3 butyrylated at 'Lys-14' (H3K14bu), histone H3 propionylated at 'Lys-14' (H3K14pr), and histone H3 acetylated at 'Lys-14' (H3K14ac). Interacts with histone H3 acetylated at 'Lys-9' (H3K9ac), histone H3 di-methylated at 'Lys-9' (H3K9me2), and histone H3 tri-methylated at 'Lys-9' (H3K9me3). Interacts with histone H4 acetylated at 'Lys-12' (H4K12ac). Interacts with histone H4 acetylated at 'Lys-16' (H4K16ac). Interacts with SWI/SNF complex components. Interacts with SMARCA2, SMARCA4, SMARCB1 and SMARCD1. Interacts with SMARCC1, SMARCC2 and ACTL6A. Interacts with RUNX1. Ubiquitous.

The protein localises to the nucleus. It is found in the cytoplasm. Its function is as follows. Plays an active role in transcriptional regulation by binding modified histones H3 and H4. Is a negative regulator of myeloid differentiation of hematopoietic progenitor cells. Might also have a role in the development and maturation of lymphoid cells. Involved in the regulation of non-canonical NF-kappa-B pathway. The polypeptide is Zinc finger protein ubi-d4 (DPF2) (Homo sapiens (Human)).